Reading from the N-terminus, the 103-residue chain is ESAT-6-like protein EsxF (103 aa).

Belongs to the WXG100 family. CFP-10 subfamily.

It localises to the secreted. The chain is ESAT-6-like protein EsxF from Mycobacterium tuberculosis (strain CDC 1551 / Oshkosh).